Reading from the N-terminus, the 3013-residue chain is DmX-like protein 1 (3013 aa).

WD repeat units follow at residues 108–145 (FLDS…TEDE), 164–204 (KTAS…RPAV), and 227–275 (AHPR…NDCF). 4 positions are modified to phosphoserine: Ser322, Ser420, Ser423, and Ser434. Positions 418–442 (PSSEASVEDSIQADLKSDEELDDGV) are disordered. A WD 4 repeat occupies 474 to 514 (DHQIEVLLSEWSKNADMLFSIHPMDGSLLVWHVDWLDEYQP). Ser572 is modified (phosphoserine). 2 WD repeats span residues 578–619 (AHSK…ESAF) and 842–893 (KKRL…TPVS). Phosphoserine occurs at positions 916 and 922. 3 WD repeats span residues 970-1008 (HLSS…GESA), 1145-1193 (EDGS…PLSK), and 1208-1248 (GAPP…EPVI). Phosphoserine occurs at positions 1829, 1896, 1903, and 1965. Disordered stretches follow at residues 2364 to 2406 (GQAN…PPAV) and 2431 to 2462 (QSRA…GLQL). Residues 2385–2398 (SKVSARESPVSSSS) show a composition bias toward low complexity. The segment covering 2437–2455 (DSEESLESDDEEEEDDDDA) has biased composition (acidic residues). WD repeat units follow at residues 2728 to 2769 (KAIN…TCFR), 2771 to 2810 (GGNS…CPVT), 2822 to 2864 (CHNK…ANSL), 2870 to 2909 (CHDS…QRQL), 2912 to 2951 (SHDS…LLHT), and 2964 to 3002 (NIGT…SPLN).

The protein is DmX-like protein 1 (Dmxl1) of Mus musculus (Mouse).